The sequence spans 364 residues: Probable secreted lipase phiG (364 aa).

Residues 1–18 (MMPFMDLILSILVSSVLL) form the signal peptide. N-linked (GlcNAc...) asparagine glycosylation occurs at asparagine 49. The Nucleophile role is filled by serine 203. An N-linked (GlcNAc...) asparagine glycan is attached at asparagine 262.

This sequence belongs to the AB hydrolase superfamily.

The protein localises to the secreted. It catalyses the reaction a carboxylic ester + H2O = an alcohol + a carboxylate + H(+). Its function is as follows. Part of the gene cluster that mediates the biosynthesis of the antihypercholesterolemic agents phomoidrides which are dimeric anhydrides. The function of phiG within the pathway has still to be determined. The pathway begins with the highly reducing polyketide synthase phiA that catalyzes the formation of a C12-fatty acyl-ACP, starting from one acetate and 5 malonate units. The hydrolase phiM is involved in the release of the C12-fatty acyl chain from phiA. The alkylcitrate synthase (ACS) phiJ and the alkylcitrate dehydratase (ACDH) phiI then give rise to decarboxylated monomeric anhydrides by coupling the C12-fatty acyl chain with oxalacetic acid. The cyclase phiC is responsible for the dimerization of the monomeric anhydrides which leads to the production of prephomoidride that contains the characteristic bicyclo[4.3.1]deca-1,6-diene system of phomoidrides. Iterative oxidation catalyzed by the alpha-ketoglutarate-dependent dioxygenase phiK produced then phomoidride A. Finally, the methyltransferase phiE converts phomoidride A to phomoidride B via an acetalization reaction. The phosphatidylethanolamine-binding protein phiB and phiN are not essential for dimerization and their functions have still to be determined. In Fungal sp. (strain ATCC 74256), this protein is Probable secreted lipase phiG.